A 217-amino-acid chain; its full sequence is Adenylate kinase (217 aa).

10 to 15 (GIGKGT) is a binding site for ATP. An NMP region spans residues 30–59 (ATGDIFRKNFKENTELGILIKKIIAQGLLV). Residues Thr-31, Arg-36, 57-59 (LLV), 85-88 (GFPR), and Gln-92 each bind AMP. The segment at 126-163 (GRRICPECGKVYHIENIPPKTPGICDKDQKTLIQREDD) is LID. Arg-127 lines the ATP pocket. Cys-130 and Cys-133 together coordinate Zn(2+). 136–137 (VY) provides a ligand contact to ATP. The Zn(2+) site is built by Cys-150 and Asp-153. AMP contacts are provided by Arg-160 and Arg-171. Gln-199 serves as a coordination point for ATP.

The protein belongs to the adenylate kinase family. As to quaternary structure, monomer.

The protein localises to the cytoplasm. The catalysed reaction is AMP + ATP = 2 ADP. It functions in the pathway purine metabolism; AMP biosynthesis via salvage pathway; AMP from ADP: step 1/1. Its function is as follows. Catalyzes the reversible transfer of the terminal phosphate group between ATP and AMP. Plays an important role in cellular energy homeostasis and in adenine nucleotide metabolism. The chain is Adenylate kinase from Onion yellows phytoplasma (strain OY-M).